Here is a 540-residue protein sequence, read N- to C-terminus: Probable ATP-dependent RNA helicase DDX28 (540 aa).

The Mitochondrial targeting signal motif lies at 3–18 (LTRPVRLFSLVTRLLL). A Q motif motif is present at residues 126-156 (GSFADLGLEPRVLHALQEAAPEVVQPTTVQS). One can recognise a Helicase ATP-binding domain in the interval 159-351 (IPSLLRGRHV…NKVASPDAVT (193 aa)). 172 to 179 (AETGSGKT) provides a ligand contact to ATP. A Nuclear export signal motif is present at residues 180 to 191 (LSYLLPLLQRLL). The DEAD motif lies at 286-289 (DEAD). Residues 377 to 536 (KVAELVHILK…GLASSVKEPL (160 aa)) form the Helicase C-terminal domain. The Nuclear localization signal signature appears at 520–523 (RRRR).

It belongs to the DEAD box helicase family. In terms of assembly, monomer. Found in a complex with GRSF1, DHX30, FASTKD2 and FASTKD5. Associates with the 16S mitochondrial rRNA (16S mt-rRNA) and with the mitochondrial ribosome large subunit (39S). In terms of tissue distribution, expressed in all tissues tested, including brain, placenta, lung, liver, skeletal muscle, kidney, pancreas, leukocytes, colon, small intestine, ovary and prostate.

Its subcellular location is the nucleus. It is found in the mitochondrion. The protein localises to the mitochondrion matrix. The protein resides in the mitochondrion nucleoid. The catalysed reaction is ATP + H2O = ADP + phosphate + H(+). In terms of biological role, plays an essential role in facilitating the proper assembly of the mitochondrial large ribosomal subunit and its helicase activity is essential for this function. May be involved in RNA processing or transport. Has RNA and Mg(2+)-dependent ATPase activity. This chain is Probable ATP-dependent RNA helicase DDX28 (DDX28), found in Homo sapiens (Human).